Consider the following 495-residue polypeptide: Phytochrome A type 5 (495 aa).

Low complexity predominate over residues 1-21 (MSSSRPASSSSSRNRQSSQAR). The segment at 1-24 (MSSSRPASSSSSRNRQSSQARVLA) is disordered. Positions 217–402 (SMEMLCNTVV…VFAVHVNREF (186 aa)) constitute a GAF domain. C322 lines the phytochromobilin pocket.

This sequence belongs to the phytochrome family. Homodimer. Post-translationally, contains one covalently linked phytochromobilin chromophore.

Regulatory photoreceptor which exists in two forms that are reversibly interconvertible by light: the Pr form that absorbs maximally in the red region of the spectrum and the Pfr form that absorbs maximally in the far-red region. Photoconversion of Pr to Pfr induces an array of morphogenic responses, whereas reconversion of Pfr to Pr cancels the induction of those responses. Pfr controls the expression of a number of nuclear genes including those encoding the small subunit of ribulose-bisphosphate carboxylase, chlorophyll A/B binding protein, protochlorophyllide reductase, rRNA, etc. It also controls the expression of its own gene(s) in a negative feedback fashion. This is Phytochrome A type 5 (PHYA5) from Avena sativa (Oat).